A 364-amino-acid chain; its full sequence is Dihydroorotate dehydrogenase (quinone) (364 aa).

FMN is bound by residues 62–66 (AGFDK) and T86. Residue K66 participates in substrate binding. 111–115 (NRMGF) provides a ligand contact to substrate. N142 and N175 together coordinate FMN. N175 lines the substrate pocket. The active-site Nucleophile is S178. N180 contacts substrate. 2 residues coordinate FMN: K216 and T244. Position 245–246 (245–246 (NT)) interacts with substrate. FMN is bound by residues G267, G296, and 317-318 (YT).

It belongs to the dihydroorotate dehydrogenase family. Type 2 subfamily. As to quaternary structure, monomer. FMN is required as a cofactor.

It localises to the cell membrane. It carries out the reaction (S)-dihydroorotate + a quinone = orotate + a quinol. Its pathway is pyrimidine metabolism; UMP biosynthesis via de novo pathway; orotate from (S)-dihydroorotate (quinone route): step 1/1. In terms of biological role, catalyzes the conversion of dihydroorotate to orotate with quinone as electron acceptor. The polypeptide is Dihydroorotate dehydrogenase (quinone) (Anaeromyxobacter dehalogenans (strain 2CP-1 / ATCC BAA-258)).